A 258-amino-acid chain; its full sequence is Acyl-[acyl-carrier-protein]--UDP-N-acetylglucosamine O-acyltransferase (258 aa).

It belongs to the transferase hexapeptide repeat family. LpxA subfamily. Homotrimer.

Its subcellular location is the cytoplasm. The catalysed reaction is a (3R)-hydroxyacyl-[ACP] + UDP-N-acetyl-alpha-D-glucosamine = a UDP-3-O-[(3R)-3-hydroxyacyl]-N-acetyl-alpha-D-glucosamine + holo-[ACP]. It participates in glycolipid biosynthesis; lipid IV(A) biosynthesis; lipid IV(A) from (3R)-3-hydroxytetradecanoyl-[acyl-carrier-protein] and UDP-N-acetyl-alpha-D-glucosamine: step 1/6. Involved in the biosynthesis of lipid A, a phosphorylated glycolipid that anchors the lipopolysaccharide to the outer membrane of the cell. In Neisseria meningitidis serogroup A / serotype 4A (strain DSM 15465 / Z2491), this protein is Acyl-[acyl-carrier-protein]--UDP-N-acetylglucosamine O-acyltransferase.